The sequence spans 280 residues: UPF0273 protein SSO1861 (280 aa).

Residues 2 to 246 enclose the KaiC domain; that stretch reads KRVKTYIPGL…YLKISNWSVS (245 aa). 29–36 is an ATP binding site; sequence GGPGTGKS.

The protein belongs to the UPF0273 family.

This Saccharolobus solfataricus (strain ATCC 35092 / DSM 1617 / JCM 11322 / P2) (Sulfolobus solfataricus) protein is UPF0273 protein SSO1861.